The sequence spans 500 residues: NAD(P)H-quinone oxidoreductase chain 4, chloroplastic (500 aa).

Helical transmembrane passes span 4-24 (FPWL…IFFL), 37-57 (ICIC…HFQL), 87-107 (IGPI…AWPV), 113-130 (LFHF…GSFS), 134-154 (LLLF…LLSM), 167-187 (FILY…GIGL), 207-227 (IALE…KSPI), 242-262 (HYST…YGLV), 272-292 (AHSL…IYAA), 305-325 (IAYS…SITD), 330-350 (GAIL…FLAG), 386-406 (LALP…GIIT), 411-431 (FLMA…LTPI), and 462-482 (LFVS…PDFL).

This sequence belongs to the complex I subunit 4 family.

The protein localises to the plastid. It is found in the chloroplast thylakoid membrane. It carries out the reaction a plastoquinone + NADH + (n+1) H(+)(in) = a plastoquinol + NAD(+) + n H(+)(out). The catalysed reaction is a plastoquinone + NADPH + (n+1) H(+)(in) = a plastoquinol + NADP(+) + n H(+)(out). This Carica papaya (Papaya) protein is NAD(P)H-quinone oxidoreductase chain 4, chloroplastic.